The sequence spans 69 residues: MFTLKKSLLLLFFLGTINLSLCEQERNAEEERRDDDEMDVEVEKRFLPMLAGLAANFLPKIVCKITKKC.

The signal sequence occupies residues Met1–Cys22. Residues Glu23–Glu43 constitute a propeptide, removed in mature form. An intrachain disulfide couples Cys63 to Cys69.

The protein belongs to the frog skin active peptide (FSAP) family. Brevinin subfamily. In terms of tissue distribution, expressed by the skin glands.

Its subcellular location is the secreted. Functionally, antimicrobial peptide active against a variety of Gram-positive and Gram-negative bacterial strains. Has antifungal activity against C.albicans ATCC 10231 and a slime mold isolate. Has hemolytic activity against human erythrocytes. The polypeptide is Brevinin-1CG5 (Amolops chunganensis (Chungan torrent frog)).